The chain runs to 294 residues: tRNA dimethylallyltransferase (294 aa).

Residue 11 to 18 (GPTAVGKT) coordinates ATP. A substrate-binding site is contributed by 13-18 (TAVGKT). Positions 36–39 (DSQQ) are interaction with substrate tRNA.

This sequence belongs to the IPP transferase family. As to quaternary structure, monomer. Mg(2+) is required as a cofactor.

It catalyses the reaction adenosine(37) in tRNA + dimethylallyl diphosphate = N(6)-dimethylallyladenosine(37) in tRNA + diphosphate. In terms of biological role, catalyzes the transfer of a dimethylallyl group onto the adenine at position 37 in tRNAs that read codons beginning with uridine, leading to the formation of N6-(dimethylallyl)adenosine (i(6)A). This chain is tRNA dimethylallyltransferase, found in Lactococcus lactis subsp. cremoris (strain MG1363).